The primary structure comprises 348 residues: Methylthioribose-1-phosphate isomerase (348 aa).

Substrate-binding positions include 48-50 (RGA), Arg90, and Gln195. Asp236 functions as the Proton donor in the catalytic mechanism. 246–247 (NK) is a substrate binding site.

This sequence belongs to the eIF-2B alpha/beta/delta subunits family. MtnA subfamily.

It carries out the reaction 5-(methylsulfanyl)-alpha-D-ribose 1-phosphate = 5-(methylsulfanyl)-D-ribulose 1-phosphate. Its pathway is amino-acid biosynthesis; L-methionine biosynthesis via salvage pathway; L-methionine from S-methyl-5-thio-alpha-D-ribose 1-phosphate: step 1/6. In terms of biological role, catalyzes the interconversion of methylthioribose-1-phosphate (MTR-1-P) into methylthioribulose-1-phosphate (MTRu-1-P). The chain is Methylthioribose-1-phosphate isomerase from Exiguobacterium sibiricum (strain DSM 17290 / CCUG 55495 / CIP 109462 / JCM 13490 / 255-15).